The primary structure comprises 467 residues: A-type ATP synthase subunit B (467 aa).

The protein belongs to the ATPase alpha/beta chains family. Has multiple subunits with at least A(3), B(3), C, D, E, F, H, I and proteolipid K(x).

It is found in the cell membrane. Functionally, component of the A-type ATP synthase that produces ATP from ADP in the presence of a proton gradient across the membrane. The B chain is a regulatory subunit. The protein is A-type ATP synthase subunit B of Methanosphaera stadtmanae (strain ATCC 43021 / DSM 3091 / JCM 11832 / MCB-3).